The primary structure comprises 1201 residues: DNA-directed RNA polymerase subunit beta' (1201 aa).

Zn(2+) contacts are provided by Cys60, Cys62, Cys75, and Cys78. Residues Asp449, Asp451, and Asp453 each contribute to the Mg(2+) site. Cys818, Cys892, Cys899, and Cys902 together coordinate Zn(2+).

This sequence belongs to the RNA polymerase beta' chain family. As to quaternary structure, the RNAP catalytic core consists of 2 alpha, 1 beta, 1 beta' and 1 omega subunit. When a sigma factor is associated with the core the holoenzyme is formed, which can initiate transcription. It depends on Mg(2+) as a cofactor. The cofactor is Zn(2+).

It catalyses the reaction RNA(n) + a ribonucleoside 5'-triphosphate = RNA(n+1) + diphosphate. In terms of biological role, DNA-dependent RNA polymerase catalyzes the transcription of DNA into RNA using the four ribonucleoside triphosphates as substrates. The chain is DNA-directed RNA polymerase subunit beta' from Listeria innocua serovar 6a (strain ATCC BAA-680 / CLIP 11262).